A 375-amino-acid polypeptide reads, in one-letter code: 23S rRNA (uracil(747)-C(5))-methyltransferase RlmC (375 aa).

Positions 3, 11, 14, and 87 each coordinate [4Fe-4S] cluster. The S-adenosyl-L-methionine site is built by Gln-212, Phe-241, Glu-262, and Asn-307. Cys-334 serves as the catalytic Nucleophile.

It belongs to the class I-like SAM-binding methyltransferase superfamily. RNA M5U methyltransferase family. RlmC subfamily.

It catalyses the reaction uridine(747) in 23S rRNA + S-adenosyl-L-methionine = 5-methyluridine(747) in 23S rRNA + S-adenosyl-L-homocysteine + H(+). Functionally, catalyzes the formation of 5-methyl-uridine at position 747 (m5U747) in 23S rRNA. In Escherichia coli O7:K1 (strain IAI39 / ExPEC), this protein is 23S rRNA (uracil(747)-C(5))-methyltransferase RlmC.